The chain runs to 433 residues: Enolase (433 aa).

Q167 is a (2R)-2-phosphoglycerate binding site. The Proton donor role is filled by E209. D246, E291, and D318 together coordinate Mg(2+). Residues K343, R372, S373, and K394 each contribute to the (2R)-2-phosphoglycerate site. K343 functions as the Proton acceptor in the catalytic mechanism.

Belongs to the enolase family. Component of the RNA degradosome, a multiprotein complex involved in RNA processing and mRNA degradation. Mg(2+) serves as cofactor.

It localises to the cytoplasm. Its subcellular location is the secreted. It is found in the cell surface. The enzyme catalyses (2R)-2-phosphoglycerate = phosphoenolpyruvate + H2O. The protein operates within carbohydrate degradation; glycolysis; pyruvate from D-glyceraldehyde 3-phosphate: step 4/5. Catalyzes the reversible conversion of 2-phosphoglycerate (2-PG) into phosphoenolpyruvate (PEP). It is essential for the degradation of carbohydrates via glycolysis. The sequence is that of Enolase from Histophilus somni (strain 129Pt) (Haemophilus somnus).